A 147-amino-acid polypeptide reads, in one-letter code: uncharacterized protein (147 aa).

In terms of domain architecture, HTH marR-type spans 1 to 137 (MRDNTIGSLI…LYELMTKVHK (137 aa)). The segment at residues 53–76 (QMELAEKVTVTQGGISRMLTRLEK) is a DNA-binding region (H-T-H motif).

This is an uncharacterized protein from Bacillus anthracis.